The sequence spans 765 residues: Beta-glucosidase cel3A (765 aa).

Positions 1–24 (MRWSSPTSSSLSLVALLLVAHVDA) are cleaved as a signal peptide. 10 N-linked (GlcNAc...) asparagine glycosylation sites follow: Asn66, Asn124, Asn250, Asn304, Asn311, Asn349, Asn549, Asn588, Asn657, and Asn681.

It belongs to the glycosyl hydrolase 3 family.

Its subcellular location is the secreted. It catalyses the reaction Hydrolysis of terminal, non-reducing beta-D-glucosyl residues with release of beta-D-glucose.. Its pathway is glycan metabolism; cellulose degradation. Beta-glucosidases are one of a number of cellulolytic enzymes involved in the degradation of cellulosic biomass. Catalyzes the last step releasing glucose from the inhibitory cellobiose. Shows higher activities on cellobiose and cellotriose but lower activities on laminarioligosaccharides and polymers. The chain is Beta-glucosidase cel3A from Pyricularia oryzae (strain 70-15 / ATCC MYA-4617 / FGSC 8958) (Rice blast fungus).